A 194-amino-acid polypeptide reads, in one-letter code: MKRERLMSINKEKAEAAIYQFLEAIGENPNREGLLDTPKRVAKMYAEMFLGLGKDPKEEFTAVFKEQHEDVVIVKDISFYSICEHHLVPFYGKAHIAYLPSDGRVTGLSKLARAVEVASKRPQLQERLTSQIADALVEALNPKGTLVMVEAEHMCMTMRGIKKPGSKTITTTARGLYKESRAERQEVISLMTKD.

Residues Cys-83, His-86, and Cys-155 each contribute to the Zn(2+) site.

This sequence belongs to the GTP cyclohydrolase I family. As to quaternary structure, toroid-shaped homodecamer, composed of two pentamers of five dimers.

The catalysed reaction is GTP + H2O = 7,8-dihydroneopterin 3'-triphosphate + formate + H(+). It functions in the pathway cofactor biosynthesis; 7,8-dihydroneopterin triphosphate biosynthesis; 7,8-dihydroneopterin triphosphate from GTP: step 1/1. This chain is GTP cyclohydrolase 1 (folE), found in Streptococcus pyogenes serotype M1.